Here is a 577-residue protein sequence, read N- to C-terminus: Methionine--tRNA ligase, mitochondrial (577 aa).

The 'HIGH' region signature appears at 25-37; it reads PIFYVNAAPHIGH. Residues 329–333 carry the 'KMSKS' region motif; the sequence is KMSKS. Residue Lys-332 participates in ATP binding.

The protein belongs to the class-I aminoacyl-tRNA synthetase family.

Its subcellular location is the mitochondrion matrix. It catalyses the reaction tRNA(Met) + L-methionine + ATP = L-methionyl-tRNA(Met) + AMP + diphosphate. This chain is Methionine--tRNA ligase, mitochondrial (MSM1), found in Candida albicans (Yeast).